Reading from the N-terminus, the 250-residue chain is ATP synthase subunit a (250 aa).

6 helical membrane-spanning segments follow: residues 29 to 49 (ASLFMAASAAIAAGFLYFATS), 84 to 104 (FFPLVFSLFMFVLTANLLGMF), 114 to 134 (IIVTAALAILVIGTVVVYGFY), 143 to 163 (VFVPSGVPGILLPLVVTIEII), 193 to 213 (FVASLGALGAVGVGGAVLPLI), and 216 to 236 (VALTGLEFLVAFLQAYVFAVL).

This sequence belongs to the ATPase A chain family. F-type ATPases have 2 components, CF(1) - the catalytic core - and CF(0) - the membrane proton channel. CF(1) has five subunits: alpha(3), beta(3), gamma(1), delta(1), epsilon(1). CF(0) has three main subunits: a(1), b(2) and c(9-12). The alpha and beta chains form an alternating ring which encloses part of the gamma chain. CF(1) is attached to CF(0) by a central stalk formed by the gamma and epsilon chains, while a peripheral stalk is formed by the delta and b chains.

The protein resides in the cell inner membrane. In terms of biological role, key component of the proton channel; it plays a direct role in the translocation of protons across the membrane. The polypeptide is ATP synthase subunit a (Rhizobium johnstonii (strain DSM 114642 / LMG 32736 / 3841) (Rhizobium leguminosarum bv. viciae)).